The sequence spans 141 residues: D-aminoacyl-tRNA deacylase (141 aa).

The Gly-cisPro motif, important for rejection of L-amino acids motif lies at 133–134; sequence GP.

This sequence belongs to the DTD family. As to quaternary structure, homodimer.

The protein resides in the cytoplasm. The catalysed reaction is glycyl-tRNA(Ala) + H2O = tRNA(Ala) + glycine + H(+). The enzyme catalyses a D-aminoacyl-tRNA + H2O = a tRNA + a D-alpha-amino acid + H(+). Its function is as follows. An aminoacyl-tRNA editing enzyme that deacylates mischarged D-aminoacyl-tRNAs. Also deacylates mischarged glycyl-tRNA(Ala), protecting cells against glycine mischarging by AlaRS. Acts via tRNA-based rather than protein-based catalysis; rejects L-amino acids rather than detecting D-amino acids in the active site. By recycling D-aminoacyl-tRNA to D-amino acids and free tRNA molecules, this enzyme counteracts the toxicity associated with the formation of D-aminoacyl-tRNA entities in vivo and helps enforce protein L-homochirality. The chain is D-aminoacyl-tRNA deacylase from Kineococcus radiotolerans (strain ATCC BAA-149 / DSM 14245 / SRS30216).